Here is a 163-residue protein sequence, read N- to C-terminus: Retinoic acid receptor responder protein 2 (163 aa).

A signal peptide spans 1–20 (MRRLLIPLALWLGAVGVGVA). Intrachain disulfides connect cysteine 77–cysteine 87, cysteine 98–cysteine 117, and cysteine 101–cysteine 135. A propeptide spanning residues 158–163 (KALPRS) is cleaved from the precursor.

In terms of processing, secreted in an inactive precursor form, prochemerin, which is proteolytically processed by a variety of extracellular proteases to generate forms with differing levels of bioactivity. For example, the removal of six amino acids results in chemerin-157, which exhibits the highest activity, while removal of seven amino acids results in chemerin-156 which has slightly less activity. Some proteases are able to cleave at more than one site and chemerin forms may be sequentially processed by different enzymes to modulate activity levels. The coordinated expression and activity of chemerin-modifying enzymes is essential for regulating its bioactivation, inactivation and, consequently, biological function. Cathepsin G cleaves seven C-terminal amino acids from prochemerin (chemerin-156), elastase is able to cleave six (chemerin-157), eight (chemerin-155) or eleven (chemerin-152), plasmin cleaves five amino acids (chemerin-158), and tryptase cleaves five (chemerin-158) or eight (chemerin-155). Multiple cleavages might be required to fully activate chemerin, with an initial tryptase cleavage resulting in chemerin with low activity (chemerin-158), and a second cleavage by carboxypeptidase N or B producing highly active chemerin (chemerin-157).

It localises to the secreted. Its function is as follows. Adipocyte-secreted protein (adipokine) that regulates adipogenesis, metabolism and inflammation through activation of the chemokine-like receptor 1 (CMKLR1). Also acts as a ligand for CMKLR2. Can also bind to C-C chemokine receptor-like 2 (CCRL2), but with a lower affinity than it does to CMKLR1 or CMKLR2. Positively regulates adipocyte differentiation, modulates the expression of adipocyte genes involved in lipid and glucose metabolism and might play a role in angiogenesis, a process essential for the expansion of white adipose tissue. Also acts as a pro-inflammatory adipokine, causing an increase in secretion of pro-inflammatory and prodiabetic adipokines, which further impair adipose tissue metabolic function and have negative systemic effects including impaired insulin sensitivity, altered glucose and lipid metabolism, and a decrease in vascular function in other tissues. Can have both pro- and anti-inflammatory properties depending on the modality of enzymatic cleavage by different classes of proteases. Acts as a chemotactic factor for leukocyte populations expressing CMKLR1, particularly immature plasmacytoid dendritic cells, but also immature myeloid DCs, macrophages and natural killer cells. Exerts an anti-inflammatory role by preventing TNF/TNFA-induced VCAM1 expression and monocytes adhesion in vascular endothelial cells. The effect is mediated via inhibiting activation of NF-kappa-B and CRK/p38 through stimulation of AKT1/NOS3 signaling and nitric oxide production. Exhibits an antimicrobial function in the skin. This Pongo abelii (Sumatran orangutan) protein is Retinoic acid receptor responder protein 2 (RARRES2).